The sequence spans 372 residues: MQSVIAQAKRIVVKVGSSLVTNDGKGLDHDAIARWAAQIARLRVAGKEVVLVSSGAIAEGMQRLGWARRPKEIHELQAAAAVGQMGLAQVYESQFTRYGIRTAQVLLTHADLADRERYLNARSTLLTLLSLGVVPIINENDTVVTDEIKFGDNDTLGALVTNLIEGDALVILTDQRGLYTADPRKDPAAQFVDEALAGTPELEAMAGGAGTSIGRGGMLTKILAAKRAAKSGAHTTIASGREANVLERLAAGEAIGTQLLAPTGRLTARKQWMADHLQLRGRVVIDGGAVEKLTSGGKSLLPIGVVEVQGEFARGEVIACVDAQGKEVARGITNYSSAESRLIARKPSSEIESVLGHLNEPELIHRDNLVLV.

Lys14 provides a ligand contact to ATP. Substrate contacts are provided by Ser54, Asp141, and Asn153. 173 to 174 lines the ATP pocket; sequence TD. The PUA domain maps to 280 to 358; sequence RGRVVIDGGA…SEIESVLGHL (79 aa).

It belongs to the glutamate 5-kinase family.

The protein localises to the cytoplasm. The catalysed reaction is L-glutamate + ATP = L-glutamyl 5-phosphate + ADP. Its pathway is amino-acid biosynthesis; L-proline biosynthesis; L-glutamate 5-semialdehyde from L-glutamate: step 1/2. In terms of biological role, catalyzes the transfer of a phosphate group to glutamate to form L-glutamate 5-phosphate. This Cupriavidus taiwanensis (strain DSM 17343 / BCRC 17206 / CCUG 44338 / CIP 107171 / LMG 19424 / R1) (Ralstonia taiwanensis (strain LMG 19424)) protein is Glutamate 5-kinase.